Consider the following 55-residue polypeptide: Large ribosomal subunit protein bL33A (55 aa).

This sequence belongs to the bacterial ribosomal protein bL33 family.

This Mycobacterium sp. (strain JLS) protein is Large ribosomal subunit protein bL33A.